The sequence spans 344 residues: L-rhamnose-proton symporter (344 aa).

Transmembrane regions (helical) follow at residues 4–24 (AITMGIFWHLIGAASAACFYA), 38–58 (WSVGGIVSWIILPWTISALLL), 68–88 (FSLSTLLPVFLFGAMWGIGNI), 101–121 (MGIGIAIGITLIVGTLMTPII), 137–157 (TLLGVLVALIGVGIVTRAGQL), 175–195 (LVLAVMCGIFSAGMSFAMNAA), 214–234 (LPSYVVIMGGGAIINLGFCFI), 259–279 (VLLSALGGLMWYLQFFFYAWG), 290–310 (ISWMLHMSFYVLCGGIVGLVL), and 323–343 (VLSLGCVVIIVAANIVGIGMA).

This sequence belongs to the L-rhamnose transporter (TC 2.A.7.6) family.

It is found in the cell inner membrane. It carries out the reaction L-rhamnopyranose(in) + H(+)(in) = L-rhamnopyranose(out) + H(+)(out). Uptake of L-rhamnose across the cytoplasmic membrane with the concomitant transport of protons into the cell (symport system). The protein is L-rhamnose-proton symporter of Shigella sonnei (strain Ss046).